The chain runs to 60 residues: Large ribosomal subunit protein uL30 (60 aa).

Belongs to the universal ribosomal protein uL30 family. As to quaternary structure, part of the 50S ribosomal subunit.

In Streptococcus mutans serotype c (strain ATCC 700610 / UA159), this protein is Large ribosomal subunit protein uL30.